An 891-amino-acid polypeptide reads, in one-letter code: DNA mismatch repair protein MutS (891 aa).

ATP is bound at residue 646-653; sequence GPNMAGKS.

It belongs to the DNA mismatch repair MutS family.

In terms of biological role, this protein is involved in the repair of mismatches in DNA. It is possible that it carries out the mismatch recognition step. This protein has a weak ATPase activity. This Rickettsia canadensis (strain McKiel) protein is DNA mismatch repair protein MutS.